The chain runs to 474 residues: Dihydrolipoyl dehydrogenase (474 aa).

Residues 36–44 (EAKDMGGTC), Lys-53, and Gly-119 contribute to the FAD site. A disulfide bridge links Cys-44 with Cys-49. Residues 184–188 (GSGYI), Glu-207, and 275–278 (ATGR) contribute to the NAD(+) site. Residues Asp-323 and Ala-331 each contribute to the FAD site. The active-site Proton acceptor is the His-459.

This sequence belongs to the class-I pyridine nucleotide-disulfide oxidoreductase family. In terms of assembly, homodimer. The cofactor is FAD.

It is found in the cell inner membrane. It carries out the reaction N(6)-[(R)-dihydrolipoyl]-L-lysyl-[protein] + NAD(+) = N(6)-[(R)-lipoyl]-L-lysyl-[protein] + NADH + H(+). Its function is as follows. Lipoamide dehydrogenase is a component of the alpha-ketoacid dehydrogenase complexes. The sequence is that of Dihydrolipoyl dehydrogenase (lpdA) from Synechocystis sp. (strain ATCC 27184 / PCC 6803 / Kazusa).